Consider the following 166-residue polypeptide: Putative lipoprotein Lxx21020 (166 aa).

An N-terminal signal peptide occupies residues 1 to 22; the sequence is MTKTTRLLRATTVAAILLGLTG. A lipid anchor (N-palmitoyl cysteine) is attached at Cys-23. Residue Cys-23 is the site of S-diacylglycerol cysteine attachment.

The protein resides in the cell membrane. This Leifsonia xyli subsp. xyli (strain CTCB07) protein is Putative lipoprotein Lxx21020.